The chain runs to 163 residues: Ribosome maturation factor RimP (163 aa).

Belongs to the RimP family.

It is found in the cytoplasm. Functionally, required for maturation of 30S ribosomal subunits. This Polynucleobacter asymbioticus (strain DSM 18221 / CIP 109841 / QLW-P1DMWA-1) (Polynucleobacter necessarius subsp. asymbioticus) protein is Ribosome maturation factor RimP.